Consider the following 385-residue polypeptide: Leucine aminopeptidase 1 (385 aa).

A signal peptide spans 1-20; it reads MKFPSLLSLGVAASTTIVAA. Positions 21-87 are excised as a propeptide; that stretch reads VPDQKPIGDI…FPKTFAQTTV (67 aa). N177 carries an N-linked (GlcNAc...) asparagine glycan. The Zn(2+) site is built by H185, D204, E243, and D270. C319 and C323 are disulfide-bonded. H352 is a binding site for Zn(2+).

It belongs to the peptidase M28 family. M28E subfamily. Monomer. It depends on Zn(2+) as a cofactor.

The protein localises to the secreted. Functionally, extracellular aminopeptidase that allows assimilation of proteinaceous substrates. This Ajellomyces capsulatus (strain G186AR / H82 / ATCC MYA-2454 / RMSCC 2432) (Darling's disease fungus) protein is Leucine aminopeptidase 1 (LAP1).